Consider the following 234-residue polypeptide: NAD-dependent protein deacylase (234 aa).

Residues 1-234 (MKNLVVLTGA…ELKQLLIPAP (234 aa)) form the Deacetylase sirtuin-type domain. NAD(+) is bound at residue 9–28 (GAGMSAESGISTFRDAGGLW). Residues Tyr53 and Arg56 each contribute to the substrate site. 86–89 (QNVD) is a binding site for NAD(+). His104 (proton acceptor) is an active-site residue. 175–177 (GTS) is an NAD(+) binding site.

Belongs to the sirtuin family. Class III subfamily.

Its subcellular location is the cytoplasm. The enzyme catalyses N(6)-acetyl-L-lysyl-[protein] + NAD(+) + H2O = 2''-O-acetyl-ADP-D-ribose + nicotinamide + L-lysyl-[protein]. The catalysed reaction is N(6)-succinyl-L-lysyl-[protein] + NAD(+) + H2O = 2''-O-succinyl-ADP-D-ribose + nicotinamide + L-lysyl-[protein]. NAD-dependent lysine deacetylase and desuccinylase that specifically removes acetyl and succinyl groups on target proteins. Modulates the activities of several proteins which are inactive in their acylated form. The chain is NAD-dependent protein deacylase from Bacteroides thetaiotaomicron (strain ATCC 29148 / DSM 2079 / JCM 5827 / CCUG 10774 / NCTC 10582 / VPI-5482 / E50).